The chain runs to 393 residues: Acetylornithine aminotransferase (393 aa).

Residues 100-101 and F132 contribute to the pyridoxal 5'-phosphate site; that span reads GT. Residue R135 coordinates N(2)-acetyl-L-ornithine. A pyridoxal 5'-phosphate-binding site is contributed by 217–220; it reads DEIQ. An N6-(pyridoxal phosphate)lysine modification is found at K246. S275 lines the N(2)-acetyl-L-ornithine pocket. T276 provides a ligand contact to pyridoxal 5'-phosphate.

The protein belongs to the class-III pyridoxal-phosphate-dependent aminotransferase family. ArgD subfamily. As to quaternary structure, homodimer. Pyridoxal 5'-phosphate is required as a cofactor.

It localises to the cytoplasm. It catalyses the reaction N(2)-acetyl-L-ornithine + 2-oxoglutarate = N-acetyl-L-glutamate 5-semialdehyde + L-glutamate. Its pathway is amino-acid biosynthesis; L-arginine biosynthesis; N(2)-acetyl-L-ornithine from L-glutamate: step 4/4. This is Acetylornithine aminotransferase from Campylobacter jejuni subsp. jejuni serotype O:2 (strain ATCC 700819 / NCTC 11168).